A 329-amino-acid chain; its full sequence is Phosphate acyltransferase (329 aa).

The protein belongs to the PlsX family. Homodimer. Probably interacts with PlsY.

It localises to the cytoplasm. The enzyme catalyses a fatty acyl-[ACP] + phosphate = an acyl phosphate + holo-[ACP]. It participates in lipid metabolism; phospholipid metabolism. In terms of biological role, catalyzes the reversible formation of acyl-phosphate (acyl-PO(4)) from acyl-[acyl-carrier-protein] (acyl-ACP). This enzyme utilizes acyl-ACP as fatty acyl donor, but not acyl-CoA. This is Phosphate acyltransferase from Shouchella clausii (strain KSM-K16) (Alkalihalobacillus clausii).